Reading from the N-terminus, the 396-residue chain is Phosphoglycerate kinase (396 aa).

Residues 21–23, Arg36, 59–62, Arg118, and Arg151 contribute to the substrate site; these read DLN and HFGR. ATP contacts are provided by residues Lys201, Glu323, and 353-356; that span reads GGDT.

This sequence belongs to the phosphoglycerate kinase family. As to quaternary structure, monomer.

The protein localises to the cytoplasm. The catalysed reaction is (2R)-3-phosphoglycerate + ATP = (2R)-3-phospho-glyceroyl phosphate + ADP. The protein operates within carbohydrate degradation; glycolysis; pyruvate from D-glyceraldehyde 3-phosphate: step 2/5. The sequence is that of Phosphoglycerate kinase from Rhodospirillum centenum (strain ATCC 51521 / SW).